The following is a 526-amino-acid chain: Bifunctional purine biosynthesis protein PurH (526 aa).

In terms of domain architecture, MGS-like spans 1–147 (MSVIKRALIS…KNWKHVAIVT (147 aa)).

This sequence belongs to the PurH family.

It catalyses the reaction (6R)-10-formyltetrahydrofolate + 5-amino-1-(5-phospho-beta-D-ribosyl)imidazole-4-carboxamide = 5-formamido-1-(5-phospho-D-ribosyl)imidazole-4-carboxamide + (6S)-5,6,7,8-tetrahydrofolate. The enzyme catalyses IMP + H2O = 5-formamido-1-(5-phospho-D-ribosyl)imidazole-4-carboxamide. The protein operates within purine metabolism; IMP biosynthesis via de novo pathway; 5-formamido-1-(5-phospho-D-ribosyl)imidazole-4-carboxamide from 5-amino-1-(5-phospho-D-ribosyl)imidazole-4-carboxamide (10-formyl THF route): step 1/1. It participates in purine metabolism; IMP biosynthesis via de novo pathway; IMP from 5-formamido-1-(5-phospho-D-ribosyl)imidazole-4-carboxamide: step 1/1. This chain is Bifunctional purine biosynthesis protein PurH, found in Neisseria gonorrhoeae (strain NCCP11945).